Consider the following 3135-residue polypeptide: Beauvericin nonribosomal cyclodepsipeptide synthetase BEA1 (3135 aa).

Residues H70 to L458 are condensation 1. Positions L196–G228 are disordered. An adenylation 1 region spans residues S499–R896. One can recognise a Carrier 1 domain in the interval S1021–A1097. The residue at position 1058 (S1058) is an O-(pantetheine 4'-phosphoryl)serine. Positions S1115–T1542 are condensation 2. Residues F1571 to R1974 form an adenylation 2 region. The S-adenosyl-L-methionine-dependent N-methyltransferase stretch occupies residues M2042 to V2182. Carrier domains are found at residues V2509–L2583 and A2603–D2677. An O-(pantetheine 4'-phosphoryl)serine mark is found at S2543 and S2637. The interval Q2721 to T3127 is condensation 3.

This sequence belongs to the NRP synthetase family.

It carries out the reaction 3 (R)-2-hydroxy-3-methylbutanoate + 3 L-phenylalanine + 3 S-adenosyl-L-methionine + 6 ATP = beauvericin + 6 AMP + 3 S-adenosyl-L-homocysteine + 6 diphosphate + 6 H(+). Functionally, beauvericin nonribosomal cyclodepsipeptide synthetase; part of the gene cluster that mediates the biosynthesis of beauvericin (BEA), a non-ribosomal cyclic hexadepsipeptide that shows antibiotic, antifungal, insecticidal, and cancer cell antiproliferative and antihaptotactic activity. Ketoisovalerate reductase BEA2 catalyzes the NADPH-specific reduction of ketoisovaleric acid to hydroxyisovalerate, a precursor for beauvericin biosynthesis. The nonribosomal cyclodepsipeptide synthetase BEA1 then catalyzes the formation of beauvericin via condensation and cyclization of 3 dipeptidol monomers, each composed of one unit of hydroxyisovalerate and one unit of N-methyl-phenylalanine. The protein is Beauvericin nonribosomal cyclodepsipeptide synthetase BEA1 of Gibberella fujikuroi (strain CBS 195.34 / IMI 58289 / NRRL A-6831) (Bakanae and foot rot disease fungus).